Consider the following 185-residue polypeptide: Ribosome-recycling factor (185 aa).

Belongs to the RRF family.

It is found in the cytoplasm. Its function is as follows. Responsible for the release of ribosomes from messenger RNA at the termination of protein biosynthesis. May increase the efficiency of translation by recycling ribosomes from one round of translation to another. This Shewanella baltica (strain OS223) protein is Ribosome-recycling factor.